We begin with the raw amino-acid sequence, 775 residues long: Endothelin-converting enzyme-like 1 (775 aa).

The Cytoplasmic segment spans residues 1–61; that stretch reads MEAPYSMTAH…LPRWNRREVC (61 aa). The disordered stretch occupies residues 23-51; that stretch reads CGTGGARGTSLPPGFPRSSGRSASGARSG. Over residues 32–51 the composition is skewed to low complexity; it reads SLPPGFPRSSGRSASGARSG. Residues 62-82 traverse the membrane as a helical; Signal-anchor for type II membrane protein segment; sequence LLSGLVFAAGLCAILAAMLAL. Residues 83-775 lie on the Lumenal side of the membrane; sequence KYLGPGAAGT…MNPVHKCSVW (693 aa). The Peptidase M13 domain occupies 99–775; sequence GCPERKAFAR…MNPVHKCSVW (677 aa). Disulfide bonds link Cys-124–Cys-760, Cys-132–Cys-720, Cys-188–Cys-441, and Cys-649–Cys-772. N-linked (GlcNAc...) asparagine glycosylation is found at Asn-255 and Asn-322. His-612 provides a ligand contact to Zn(2+). Glu-613 is an active-site residue. His-616 serves as a coordination point for Zn(2+). Asn-656 carries an N-linked (GlcNAc...) asparagine glycan. Glu-672 contributes to the Zn(2+) binding site. Asp-676 functions as the Proton donor in the catalytic mechanism.

It belongs to the peptidase M13 family. The cofactor is Zn(2+). As to expression, highly expressed in the CNS, in particular in neurons of the caudate putamen, diagonal band, the paraventricular nucleus of the thalamus, part of the hypothalamus, in cranial motor nuclei, inferior olive, and substantia gelatinosa of the spinal tract trigeminal nucleus. Not detected in cerebral cortex, hippocampus and cerebellum.

The protein resides in the membrane. In terms of biological role, may contribute to the degradation of peptide hormones and be involved in the inactivation of neuronal peptides. Cleaves the synthetic substrate Z-Gly-Gly-Leu-pNA and releases pNA. May protect against C2-ceramide-induced apoptosis. The polypeptide is Endothelin-converting enzyme-like 1 (Ecel1) (Rattus norvegicus (Rat)).